A 77-amino-acid polypeptide reads, in one-letter code: MMFLFVSLFMFIFKWQRLIFILISLEFMMLSLFLKFSYVLGEMMFFYFMCFSVISSILGMVVMVGNMKFFGSDNCIF.

A run of 2 helical transmembrane segments spans residues 15–37 (WQRL…LKFS) and 44–64 (MFFY…VVMV).

The protein belongs to the complex I subunit 4L family.

It is found in the mitochondrion membrane. The enzyme catalyses a ubiquinone + NADH + 5 H(+)(in) = a ubiquinol + NAD(+) + 4 H(+)(out). Functionally, core subunit of the mitochondrial membrane respiratory chain NADH dehydrogenase (Complex I) that is believed to belong to the minimal assembly required for catalysis. Complex I functions in the transfer of electrons from NADH to the respiratory chain. The immediate electron acceptor for the enzyme is believed to be ubiquinone. This is NADH-ubiquinone oxidoreductase chain 4L from Caenorhabditis elegans.